Here is a 352-residue protein sequence, read N- to C-terminus: Photosystem II D2 protein (352 aa).

Threonine 2 carries the N-acetylthreonine modification. Residue threonine 2 is modified to Phosphothreonine. The helical transmembrane segment at 40–60 threads the bilayer; that stretch reads TAYLALGGWFTGTTFVTSWYT. Histidine 117 serves as a coordination point for chlorophyll a. Residues 124-140 form a helical membrane-spanning segment; that stretch reads GFMLRQFEIARSVKIRP. Residues glutamine 129 and asparagine 142 each coordinate pheophytin a. The helical transmembrane segment at 152–165 threads the bilayer; sequence VFVSVFLIYPLGQS. Histidine 197 is a binding site for chlorophyll a. The helical transmembrane segment at 207–227 threads the bilayer; it reads AALLCAIHGATVENTLFEDGD. A plastoquinone contacts are provided by histidine 214 and phenylalanine 261. Histidine 214 contributes to the Fe cation binding site. Position 268 (histidine 268) interacts with Fe cation. The helical transmembrane segment at 278–294 threads the bilayer; sequence GLWMSAIGVVGLALNLR.

Belongs to the reaction center PufL/M/PsbA/D family. PSII is composed of 1 copy each of membrane proteins PsbA, PsbB, PsbC, PsbD, PsbE, PsbF, PsbH, PsbI, PsbJ, PsbK, PsbL, PsbM, PsbT, PsbX, PsbY, PsbZ, Psb30/Ycf12, at least 3 peripheral proteins of the oxygen-evolving complex and a large number of cofactors. It forms dimeric complexes. Requires The D1/D2 heterodimer binds P680, chlorophylls that are the primary electron donor of PSII, and subsequent electron acceptors. It shares a non-heme iron and each subunit binds pheophytin, quinone, additional chlorophylls, carotenoids and lipids. There is also a Cl(-1) ion associated with D1 and D2, which is required for oxygen evolution. The PSII complex binds additional chlorophylls, carotenoids and specific lipids. as cofactor.

Its subcellular location is the plastid. It is found in the chloroplast thylakoid membrane. It carries out the reaction 2 a plastoquinone + 4 hnu + 2 H2O = 2 a plastoquinol + O2. Photosystem II (PSII) is a light-driven water:plastoquinone oxidoreductase that uses light energy to abstract electrons from H(2)O, generating O(2) and a proton gradient subsequently used for ATP formation. It consists of a core antenna complex that captures photons, and an electron transfer chain that converts photonic excitation into a charge separation. The D1/D2 (PsbA/PsbD) reaction center heterodimer binds P680, the primary electron donor of PSII as well as several subsequent electron acceptors. D2 is needed for assembly of a stable PSII complex. The protein is Photosystem II D2 protein of Chlorella vulgaris (Green alga).